A 134-amino-acid chain; its full sequence is MEEDFSSQMKKMALAMGTSLSDKDIELLPTDMRHHGSFNYLKFFKHIRKLHASGQLDDAIHTAFQSLDKDKSGFIEWNEIKYILSIIPSSGPTTPLTDEEAEAMIQAADTHGDGRINYEEFSELIKKEKIPKKK.

EF-hand domains are found at residues 55 to 90 (QLDD…IPSS) and 96 to 131 (LTDE…EKIP). Ca(2+) contacts are provided by aspartate 68, aspartate 70, serine 72, phenylalanine 74, glutamate 76, glutamate 79, aspartate 109, aspartate 113, and glutamate 120.

Belongs to the parvalbumin family.

This Homo sapiens (Human) protein is Parvalbumin-like EF-hand-containing protein.